The chain runs to 156 residues: Cytochrome c-type biogenesis protein CcmE (156 aa).

The Cytoplasmic portion of the chain corresponds to 1–8; sequence MNPLRRKR. Residues 9-29 traverse the membrane as a helical; Signal-anchor for type II membrane protein segment; the sequence is LLIILAILAGVGIAVGLAMSA. Topologically, residues 30–156 are periplasmic; the sequence is LRENINLFYT…RIRSLPRRAK (127 aa). Residues H124 and Y128 each coordinate heme.

It belongs to the CcmE/CycJ family.

Its subcellular location is the cell inner membrane. Functionally, heme chaperone required for the biogenesis of c-type cytochromes. Transiently binds heme delivered by CcmC and transfers the heme to apo-cytochromes in a process facilitated by CcmF and CcmH. This is Cytochrome c-type biogenesis protein CcmE from Pseudomonas fluorescens.